The chain runs to 592 residues: Vacuolin-B (592 aa).

A compositionally biased stretch (polar residues) spans 1-30 (MIESSSFMKKTSSENSIGSRSNIHEASTFS). Positions 1-35 (MIESSSFMKKTSSENSIGSRSNIHEASTFSSEHEN) are disordered. Residues 480 to 534 (KTTEARLKAETDNIALEQKGKAIIAEAQAKLESAQKQAQALLITAEAQKKVQEMQ) are a coiled coil. The interval 491–555 (DNIALEQKGK…EIELAKIKSE (65 aa)) is oligomerization domain.

This sequence belongs to the vacuolin family. Homotrimer.

The protein resides in the endosome membrane. Its subcellular location is the lysosome membrane. Negative regulator of late steps of the endocytic pathway. In Dictyostelium discoideum (Social amoeba), this protein is Vacuolin-B (vacB).